A 122-amino-acid chain; its full sequence is Immunoglobulin lambda variable 4-3 (122 aa).

A signal peptide spans 1–19 (MAWVSFYLLPFIFSTGLCA). Residues 20 to 44 (LPVLTQPPSASALLGASIKLTCTLS) form a framework-1 region. Residues 21 to 122 (PVLTQPPSAS…ESHTIDGQVG (102 aa)) form the Ig-like domain. C41 and C111 form a disulfide bridge. The complementarity-determining-1 stretch occupies residues 45-51 (SEHSTYT). Positions 52–68 (IEWYQQRPGRSPQYIMK) are framework-2. A complementarity-determining-2 region spans residues 69-75 (VKSDGSH). Residues 76 to 111 (SKGDGIPDRFMGSSSGADRYLTFSNLQSDDEAEYHC) form a framework-3 region. Residues 112 to 122 (GESHTIDGQVG) form a complementarity-determining-3 region.

As to quaternary structure, immunoglobulins are composed of two identical heavy chains and two identical light chains; disulfide-linked.

It is found in the secreted. The protein resides in the cell membrane. V region of the variable domain of immunoglobulin light chains that participates in the antigen recognition. Immunoglobulins, also known as antibodies, are membrane-bound or secreted glycoproteins produced by B lymphocytes. In the recognition phase of humoral immunity, the membrane-bound immunoglobulins serve as receptors which, upon binding of a specific antigen, trigger the clonal expansion and differentiation of B lymphocytes into immunoglobulins-secreting plasma cells. Secreted immunoglobulins mediate the effector phase of humoral immunity, which results in the elimination of bound antigens. The antigen binding site is formed by the variable domain of one heavy chain, together with that of its associated light chain. Thus, each immunoglobulin has two antigen binding sites with remarkable affinity for a particular antigen. The variable domains are assembled by a process called V-(D)-J rearrangement and can then be subjected to somatic hypermutations which, after exposure to antigen and selection, allow affinity maturation for a particular antigen. This is Immunoglobulin lambda variable 4-3 from Homo sapiens (Human).